A 252-amino-acid chain; its full sequence is Probable transcriptional regulatory protein TW504 (252 aa).

The protein belongs to the TACO1 family.

Its subcellular location is the cytoplasm. In Tropheryma whipplei (strain TW08/27) (Whipple's bacillus), this protein is Probable transcriptional regulatory protein TW504.